The primary structure comprises 369 residues: Aspartate beta-hydroxylase domain-containing protein 2 (369 aa).

At 1–58 (MVWAPLGPPRTDCLTLLHTPSKDSPKMSLEWLVAWSWSLDGLRDCIATGIQSVRDCDT) the chain is on the cytoplasmic side. The chain crosses the membrane as a helical span at residues 59–79 (TAVITVACLLVLFVWYCYHVG). Residues 80–369 (REQPRPYVSV…ALDFIFAPGR (290 aa)) are Lumenal-facing. An N-linked (GlcNAc...) asparagine glycan is attached at Asn211. 2 residues coordinate 2-oxoglutarate: Trp228 and Ser272. His283 is a binding site for Fe cation. A 2-oxoglutarate-binding site is contributed by 292-294 (RCH). His328 contacts Fe cation. Arg341 is a binding site for 2-oxoglutarate.

Belongs to the aspartyl/asparaginyl beta-hydroxylase family. Requires Fe cation as cofactor.

Its subcellular location is the membrane. Functionally, may function as 2-oxoglutarate-dependent dioxygenase. This Homo sapiens (Human) protein is Aspartate beta-hydroxylase domain-containing protein 2 (ASPHD2).